Here is a 288-residue protein sequence, read N- to C-terminus: Cyclic UMP-AMP synthase (288 aa).

Residues 1–23 form a disordered region; it reads MPVPESQLERWSHQGATTTAKKT. Q46 is a UTP binding site. 46–48 contributes to the ATP binding site; it reads QGS. Residues D60 and D62 each coordinate Mg(2+). UTP contacts are provided by residues D62 and 116 to 120; that span reads RKTLK. D129 lines the Mg(2+) pocket. N166 contributes to the UTP binding site. Residues K194, S212, and E265 each coordinate ATP.

It belongs to the CD-NTase family. E01 subfamily. Mg(2+) serves as cofactor.

The catalysed reaction is UTP + ATP = 3',3'-cUAMP + 2 diphosphate. Functionally, cyclic nucleotide synthase (second messenger synthase) of a CBASS antivirus system. CBASS (cyclic oligonucleotide-based antiphage signaling system) provides immunity against bacteriophage. The CD-NTase protein synthesizes cyclic nucleotides in response to infection; these serve as specific second messenger signals. The signals activate a diverse range of effectors, leading to bacterial cell death and thus abortive phage infection. A type I-B(UU) CBASS system. In terms of biological role, cyclic dinucleotide synthase that catalyzes the synthesis of 3'3'-cyclic UMP-AMP (cUMP-AMP) from UTP and ATP, a second messenger for cell signal transduction. The polypeptide is Cyclic UMP-AMP synthase (Rhodothermus marinus (strain SG0.5JP17-172)).